The chain runs to 226 residues: Small ribosomal subunit protein uS3 (226 aa).

Positions 39–107 constitute a KH type-2 domain; the sequence is IRAYIKKNVV…EVTLNIKEVK (69 aa).

Belongs to the universal ribosomal protein uS3 family. In terms of assembly, part of the 30S ribosomal subunit. Forms a tight complex with proteins S10 and S14.

Functionally, binds the lower part of the 30S subunit head. Binds mRNA in the 70S ribosome, positioning it for translation. The sequence is that of Small ribosomal subunit protein uS3 from Pelagibacter ubique (strain HTCC1062).